A 425-amino-acid chain; its full sequence is UPF0761 membrane protein PXO_04555 (425 aa).

Transmembrane regions (helical) follow at residues 48 to 68 (VFALVPLAIVVFGVLSAFPAF), 105 to 125 (FTVAGMVALVASLLITLHSIE), 154 to 174 (GTMLAAASMAMAAYVFALPLF), 182 to 202 (LAEFAWRLAPMAVEFICIVLI), 219 to 239 (GALLAVILMEIVKWGFGVYLG), and 250 to 270 (ALSALPILLLWIYLSWVSVLL).

The protein belongs to the UPF0761 family.

Its subcellular location is the cell inner membrane. This is UPF0761 membrane protein PXO_04555 from Xanthomonas oryzae pv. oryzae (strain PXO99A).